Reading from the N-terminus, the 549-residue chain is Thermosome subunit (549 aa).

The segment covering 528 to 538 has biased composition (basic and acidic residues); the sequence is EKEKEGEKGGG. Residues 528–549 are disordered; the sequence is EKEKEGEKGGGSEEFSGSSDLD. The span at 540-549 shows a compositional bias: low complexity; sequence EEFSGSSDLD.

The protein belongs to the TCP-1 chaperonin family. Forms an oligomeric complex of eight-membered rings.

Its function is as follows. Molecular chaperone; binds unfolded polypeptides in vitro, and has a weak ATPase activity. This Pyrococcus horikoshii (strain ATCC 700860 / DSM 12428 / JCM 9974 / NBRC 100139 / OT-3) protein is Thermosome subunit (ths).